The primary structure comprises 610 residues: tRNA uridine 5-carboxymethylaminomethyl modification enzyme MnmG (610 aa).

14 to 19 (GAGHAG) contributes to the FAD binding site. Residue 274–288 (GPRYCPSIEDKIVKF) coordinates NAD(+).

This sequence belongs to the MnmG family. Homodimer. Heterotetramer of two MnmE and two MnmG subunits. FAD serves as cofactor.

Its subcellular location is the cytoplasm. Functionally, NAD-binding protein involved in the addition of a carboxymethylaminomethyl (cmnm) group at the wobble position (U34) of certain tRNAs, forming tRNA-cmnm(5)s(2)U34. The polypeptide is tRNA uridine 5-carboxymethylaminomethyl modification enzyme MnmG (Chlamydia trachomatis serovar D (strain ATCC VR-885 / DSM 19411 / UW-3/Cx)).